The sequence spans 344 residues: MKSSLLVVLTAGLAVRDAIAHAIFQQLWVDGVDYGSTCNRLPTSNSPVTNVGSRDVVCNAGTRGVSGKCPVKAGGTVTVEMHQQPGDRSCKSEAIGGAHWGPVQIYLSKVSDASTADGSSGGWFKIFSDAWSKKSGGRVGDDDNWGTRDLNACCGRMDVLIPKDLPSGDYLLRAEALALHTAGQSGGAQFYISCYQITVSGGGSANYATVKFPGAYRASDPGIQINIHAVVSNYVAPGPAVVAGGVTKQAGSGCIGCESTCKVGSSPSAVAPGGKPASGGSDGNAPEVAEPSGGEGSPSAPGACEVAAYGQCGGDQYSGCTQCASGYTCKAVSPPYYSQCAPTS.

The first 20 residues, 1–20 (MKSSLLVVLTAGLAVRDAIA), serve as a signal peptide directing secretion. Cu(2+)-binding residues include H21 and H99. C58 and C194 are disulfide-bonded. The O2 site is built by H180 and Q189. Y191 provides a ligand contact to Cu(2+). A disordered region spans residues 272–301 (PGGKPASGGSDGNAPEVAEPSGGEGSPSAP). The span at 285–301 (APEVAEPSGGEGSPSAP) shows a compositional bias: low complexity. The region spanning 304 to 341 (CEVAAYGQCGGDQYSGCTQCASGYTCKAVSPPYYSQCA) is the CBM1 domain.

The protein belongs to the polysaccharide monooxygenase AA9 family. It depends on Cu(2+) as a cofactor.

The protein localises to the secreted. It carries out the reaction [(1-&gt;4)-beta-D-glucosyl]n+m + reduced acceptor + O2 = 4-dehydro-beta-D-glucosyl-[(1-&gt;4)-beta-D-glucosyl]n-1 + [(1-&gt;4)-beta-D-glucosyl]m + acceptor + H2O.. Lytic polysaccharide monooxygenase (LPMO) that depolymerizes crystalline and amorphous polysaccharides via the oxidation of scissile alpha- or beta-(1-4)-glycosidic bonds, yielding C4 oxidation products. Catalysis by LPMOs requires the reduction of the active-site copper from Cu(II) to Cu(I) by a reducing agent and H(2)O(2) or O(2) as a cosubstrate. In Neurospora crassa (strain ATCC 24698 / 74-OR23-1A / CBS 708.71 / DSM 1257 / FGSC 987), this protein is AA9 family lytic polysaccharide monooxygenase J (gh61-10).